The sequence spans 1323 residues: Lysine-specific demethylase 3A (1323 aa).

3 disordered regions span residues 255 to 287 (TRTG…PSMC), 307 to 337 (ATPS…PQGC), and 385 to 416 (SEPK…GLPK). Ser-264 bears the Phosphoserine mark. Composition is skewed to polar residues over residues 266–283 (ENNG…SEAS) and 307–327 (ATPS…NSPP). Position 325 is a phosphoserine (Ser-325). Position 446 is a phosphoserine (Ser-446). Disordered stretches follow at residues 468-487 (AEKK…LKET) and 495-517 (SCCT…LTDP). Polar residues-rich tracts occupy residues 477-486 (LGSQSQNLKE) and 495-507 (SCCT…TQTP). Residues 662–687 (CDVCDTTIFNLHWVCPRCGFGVCVDC) form a C6-type zinc finger. The LXXLL motif motif lies at 885-889 (LRNLL). Lys-895 carries the N6-acetyllysine modification. The 224-residue stretch at 1060 to 1283 (MPSRFDDLMA…HCFWLTQEFR (224 aa)) folds into the JmjC domain. Fe cation contacts are provided by His-1122, Asp-1124, and His-1251.

The protein belongs to the JHDM2 histone demethylase family. Interacts with VRK1. Fe(2+) serves as cofactor. Highly expressed in testis (at protein level). Also expressed at high levels in tissues responsive to sympathetic nerve activity such as brown adipose tissue and skeletal muscle.

Its subcellular location is the cytoplasm. It localises to the nucleus. The catalysed reaction is N(6),N(6)-dimethyl-L-lysyl(9)-[histone H3] + 2 2-oxoglutarate + 2 O2 = L-lysyl(9)-[histone H3] + 2 formaldehyde + 2 succinate + 2 CO2. In terms of biological role, histone demethylase that specifically demethylates 'Lys-9' of histone H3, thereby playing a central role in histone code. Preferentially demethylates mono- and dimethylated H3 'Lys-9' residue, with a preference for dimethylated residue, while it has weak or no activity on trimethylated H3 'Lys-9'. Demethylation of Lys residue generates formaldehyde and succinate. Involved in hormone-dependent transcriptional activation, by participating in recruitment to androgen-receptor target genes, resulting in H3 'Lys-9' demethylation and transcriptional activation. Involved in spermatogenesis by regulating expression of target genes such as PRM1 and TNP1 which are required for packaging and condensation of sperm chromatin. Involved in obesity resistance through regulation of metabolic genes such as PPARA and UCP1. This is Lysine-specific demethylase 3A (Kdm3a) from Mus musculus (Mouse).